The sequence spans 290 residues: Nucleoid occlusion protein (290 aa).

The segment at residues 153-172 (EALAQRLGKGQSTVANKLRL) is a DNA-binding region (H-T-H motif).

It belongs to the ParB family.

The protein localises to the cytoplasm. It is found in the nucleoid. Functionally, effects nucleoid occlusion by binding relatively nonspecifically to DNA and preventing the assembly of the division machinery in the vicinity of the nucleoid, especially under conditions that disturb the cell cycle. It helps to coordinate cell division and chromosome segregation by preventing the formation of the Z ring through the nucleoid, which would cause chromosome breakage. This is Nucleoid occlusion protein from Bacillus mycoides (strain KBAB4) (Bacillus weihenstephanensis).